We begin with the raw amino-acid sequence, 124 residues long: Small ribosomal subunit protein uS12 (124 aa).

Residues 1 to 24 (MPTINQLIKKPRKSQKEKTASPAL) form a disordered region. Asp89 carries the post-translational modification 3-methylthioaspartic acid.

The protein belongs to the universal ribosomal protein uS12 family. Part of the 30S ribosomal subunit. Contacts proteins S8 and S17. May interact with IF1 in the 30S initiation complex.

With S4 and S5 plays an important role in translational accuracy. In terms of biological role, interacts with and stabilizes bases of the 16S rRNA that are involved in tRNA selection in the A site and with the mRNA backbone. Located at the interface of the 30S and 50S subunits, it traverses the body of the 30S subunit contacting proteins on the other side and probably holding the rRNA structure together. The combined cluster of proteins S8, S12 and S17 appears to hold together the shoulder and platform of the 30S subunit. This chain is Small ribosomal subunit protein uS12, found in Borrelia hermsii (strain HS1 / DAH).